The sequence spans 141 residues: SLTKAERTIIGSMWTKISSQADTIGTETLERLFASYPQAKTYFPHFDLNPGSAQLRAHGSKVLAAVGEAVKSIDNVSAALAKLSELHAYVLRVDPVNFKFLSHCLLVTLASHFPADLTAEAHAAWDKFLTIVSGVLTEKYR.

Serine 1 is subject to N-acetylserine. The region spanning 1–141 (SLTKAERTII…VSGVLTEKYR (141 aa)) is the Globin domain. The residue at position 28 (threonine 28) is a Phosphothreonine. Serine 52 carries the post-translational modification Phosphoserine. Histidine 58 provides a ligand contact to heme b. Serine 72 carries the post-translational modification Phosphoserine. Residue histidine 87 coordinates heme b.

It belongs to the globin family. Heterotetramer of two zeta chains and two epsilon chains.

In terms of biological role, the zeta chain is an alpha-type chain of mammalian embryonic hemoglobin. In Sus scrofa (Pig), this protein is Hemoglobin subunit zeta.